A 173-amino-acid polypeptide reads, in one-letter code: MSRFMIRAVFFRRYTAATVGKPFRNVAEVKQYLAKQTWSIDEILHGEDTGKAAKQGVPTEEEVRKLLALCAFPVEDADLQNSKRILVKQLSFINKLHETSVDDQDKNLDENYARLLPRQNKALTYDDLLKKIDGIKQDEATGEPTGSWDSTGLAKMRKDNYFIVRQGLLKNRK.

A mitochondrion-targeting transit peptide spans Met1–Thr15.

It belongs to the GatF family. In terms of assembly, subunit of the heterotrimeric GatFAB amidotransferase (AdT) complex, composed of A, B and F subunits.

Its subcellular location is the mitochondrion inner membrane. The enzyme catalyses L-glutamyl-tRNA(Gln) + L-glutamine + ATP + H2O = L-glutaminyl-tRNA(Gln) + L-glutamate + ADP + phosphate + H(+). Allows the formation of correctly charged Gln-tRNA(Gln) through the transamidation of misacylated Glu-tRNA(Gln) in the mitochondria. The reaction takes place in the presence of glutamine and ATP through an activated gamma-phospho-Glu-tRNA(Gln). Required for proper protein synthesis within the mitochondrion. This is Glutamyl-tRNA(Gln) amidotransferase subunit F, mitochondrial from Candida glabrata (strain ATCC 2001 / BCRC 20586 / JCM 3761 / NBRC 0622 / NRRL Y-65 / CBS 138) (Yeast).